The chain runs to 138 residues: ATP synthase epsilon chain (138 aa).

Belongs to the ATPase epsilon chain family. In terms of assembly, F-type ATPases have 2 components, CF(1) - the catalytic core - and CF(0) - the membrane proton channel. CF(1) has five subunits: alpha(3), beta(3), gamma(1), delta(1), epsilon(1). CF(0) has three main subunits: a, b and c.

The protein resides in the cell inner membrane. Functionally, produces ATP from ADP in the presence of a proton gradient across the membrane. The sequence is that of ATP synthase epsilon chain from Cupriavidus pinatubonensis (strain JMP 134 / LMG 1197) (Cupriavidus necator (strain JMP 134)).